The sequence spans 55 residues: MPQLNPNPWFFIMIISWLTYSMIIQPKILSFTSTNPPARKEPTTNTTTPWNWPWT.

A helical membrane pass occupies residues 7–24 (NPWFFIMIISWLTYSMII). Residues 34–55 (TNPPARKEPTTNTTTPWNWPWT) are disordered. The segment covering 43–55 (TTNTTTPWNWPWT) has biased composition (low complexity).

The protein belongs to the ATPase protein 8 family. F-type ATPases have 2 components, CF(1) - the catalytic core - and CF(0) - the membrane proton channel.

It is found in the mitochondrion membrane. Mitochondrial membrane ATP synthase (F(1)F(0) ATP synthase or Complex V) produces ATP from ADP in the presence of a proton gradient across the membrane which is generated by electron transport complexes of the respiratory chain. F-type ATPases consist of two structural domains, F(1) - containing the extramembraneous catalytic core and F(0) - containing the membrane proton channel, linked together by a central stalk and a peripheral stalk. During catalysis, ATP synthesis in the catalytic domain of F(1) is coupled via a rotary mechanism of the central stalk subunits to proton translocation. Part of the complex F(0) domain. Minor subunit located with subunit a in the membrane. This chain is ATP synthase protein 8 (MT-ATP8), found in Vireo altiloquus (Black-whiskered vireo).